A 572-amino-acid chain; its full sequence is Neuronal acetylcholine receptor subunit alpha-9-I (572 aa).

Residues 1-19 (MKTVVLLTWISCWIDVCTS) form the signal peptide. The Extracellular portion of the chain corresponds to 20–232 (AQGRYAQKLL…YTLHLKRRSL (213 aa)). N-linked (GlcNAc...) asparagine glycosylation is present at asparagine 51. The cysteines at positions 149 and 163 are disulfide-linked. Asparagine 164 carries N-linked (GlcNAc...) asparagine glycosylation. The cysteines at positions 213 and 214 are disulfide-linked. Helical transmembrane passes span 233 to 253 (FYIF…PLGF), 263 to 283 (VSLG…VAES), and 297 to 317 (YIAT…IMNI). Topologically, residues 318-550 (HFCGAEAKPV…WKKVAKVMDR (233 aa)) are cytoplasmic. The disordered stretch occupies residues 405–458 (GHLQNHHSTHQNHLDNCRYANGGHRDDHYSNRSNQNHHSNRSQTSKGEGGEEKR). A compositionally biased stretch (low complexity) spans 435–447 (NRSNQNHHSNRSQ). A helical transmembrane segment spans residues 551–571 (FFMWIFFIMVFLMSILIIGKA).

The protein belongs to the ligand-gated ion channel (TC 1.A.9) family. Acetylcholine receptor (TC 1.A.9.1) subfamily. Expressed in the liver, olfactory mucosa, pituitary gland, hair cells of the saccule and spleen.

It localises to the postsynaptic cell membrane. The protein localises to the cell membrane. The protein is Neuronal acetylcholine receptor subunit alpha-9-I (nachra9) of Oncorhynchus mykiss (Rainbow trout).